The following is a 34-amino-acid chain: Mu-theraphotoxin-Pspp1 (34 aa).

3 disulfides stabilise this stretch: cysteine 2–cysteine 17, cysteine 9–cysteine 22, and cysteine 16–cysteine 29. At phenylalanine 34 the chain carries Phenylalanine amide.

The protein belongs to the neurotoxin 10 (Hwtx-1) family. In terms of tissue distribution, expressed by the venom gland.

It is found in the secreted. In terms of biological role, voltage-gated sodium channel inhibitor. It is unclear if it selectively inhibits Nav1.7/SCN9A or shows similar potency on all sodium channels tested. According to Escoubas et al., 2006 and Nicolas et al., 2019, it is selective over Nav1.7/SCN9A (90% inhibition at 1 uM), versus Nav1.4 and Nav1.6 (35% inhibition), and shows a small inhibition on all other sodium channels (except Nav1.8/SCN10A). According to Goncalves et al., 2019, it shows a similar inhibition on almost all sodium channels tested (Nav1.1/SCN1A (IC(50)=280.3 nM), Nav1.2/SCN2A (IC(50)=73.7 nM), Nav1.3/SCN3A (IC(50)=201.5 nM), Nav1.4/SCN4A (IC(50)&gt;2100 nM), Nav1.5/SCN5A (IC(50)=710.6 nM), Nav1.6/SCN8A (IC(50)=491.2 nM), and Nav1.7/SCN9A (IC(50)=254.3-260 nM)), except Nav1.8/SCN10A. The voltage-dependence of steady-state Nav1.7/SCN9A channel activation and inactivation are not affected, suggesting that is does not act as a gating-modifier toxin but rather blocks or impedes ion flux through the channel pore. The toxin effect is partial and poorly reversible. In addition to its inhibition to sodium channels, it also shows a small inhibition on rat Kv3.4/KCNC4 potassium channels (20% inhibition at 1 uM). In vivo, when tested on pain models, it shows analgesic activity. This Phlogiellus sp. (Tarantula) protein is Mu-theraphotoxin-Pspp1.